We begin with the raw amino-acid sequence, 305 residues long: MGRLTVNLAGVTFKNPVMPASGTAAYGQQMAQQLDLSALGGLVIKSTTAEPKAGNPRPTTAETTAGWLNAIGLKNPGIDNVLADKLPWLATHYPDLPIIGSVAGASFDEYVAVARKMASAPNVKLLEINISCPNVDHGGLAFGTDPATVTALTKAIVAAVDKPVFMKLTPNVTDIVPIALAAEAGGAAGLTMINTLTGMGIDLATRQPILAHGTGGLSGKAIHPLAVRMIHDVRQHTKLPIIGVGGVFTPADVLEFYLAGANAVQVGAATYGHPTACTDIIAGLPAAMDQYGITSLQALIQEVQG.

Residues Ser21 and 45–46 (KS) each bind FMN. Substrate is bound by residues Lys45, 69–73 (NAIGL), and Asn129. FMN is bound at residue Asn129. Catalysis depends on Cys132, which acts as the Nucleophile. FMN is bound by residues Lys167 and Ile193. 194-195 (NT) contacts substrate. FMN contacts are provided by residues Gly219 and 245-246 (GG).

This sequence belongs to the dihydroorotate dehydrogenase family. Type 1 subfamily. In terms of assembly, homodimer. FMN serves as cofactor.

Its subcellular location is the cytoplasm. It catalyses the reaction (S)-dihydroorotate + fumarate = orotate + succinate. It participates in pyrimidine metabolism; UMP biosynthesis via de novo pathway. Its function is as follows. Catalyzes the conversion of dihydroorotate to orotate with fumarate as the electron acceptor. The protein is Dihydroorotate dehydrogenase A (fumarate) (pyrD) of Lactiplantibacillus plantarum (strain ATCC BAA-793 / NCIMB 8826 / WCFS1) (Lactobacillus plantarum).